A 367-amino-acid polypeptide reads, in one-letter code: sn-glycerol-3-phosphate import ATP-binding protein UgpC (367 aa).

Positions 4–235 (LSLRNVQKTY…PASTFVAGFI (232 aa)) constitute an ABC transporter domain. ATP is bound at residue 37 to 44 (GPSGCGKS).

This sequence belongs to the ABC transporter superfamily. sn-glycerol-3-phosphate importer (TC 3.A.1.1.3) family. In terms of assembly, the complex is composed of two ATP-binding proteins (UgpC), two transmembrane proteins (UgpA and UgpE) and a solute-binding protein (UgpB).

Its subcellular location is the cell inner membrane. It carries out the reaction sn-glycerol 3-phosphate(out) + ATP + H2O = sn-glycerol 3-phosphate(in) + ADP + phosphate + H(+). Part of the ABC transporter complex UgpBAEC involved in sn-glycerol-3-phosphate (G3P) import. Responsible for energy coupling to the transport system. This is sn-glycerol-3-phosphate import ATP-binding protein UgpC from Cupriavidus metallidurans (strain ATCC 43123 / DSM 2839 / NBRC 102507 / CH34) (Ralstonia metallidurans).